We begin with the raw amino-acid sequence, 85 residues long: Alpha-defensin 14 (85 aa).

The N-terminal stretch at 1–11 (ALVLLAFQVQA) is a signal peptide. Positions 12–50 (DPIQNTDEETKTEEQPGEDDQAVSVSFGDPEGSSLQEES) are excised as a propeptide. Positions 13–48 (PIQNTDEETKTEEQPGEDDQAVSVSFGDPEGSSLQE) are disordered. 3 disulfides stabilise this stretch: Cys-56-Cys-84, Cys-58-Cys-73, and Cys-63-Cys-83.

This sequence belongs to the alpha-defensin family. As to expression, paneth cells of the small bowel.

The protein resides in the secreted. In terms of biological role, probably contributes to the antimicrobial barrier function of the small bowel mucosa. This Mus musculus (Mouse) protein is Alpha-defensin 14 (Defa14).